A 199-amino-acid polypeptide reads, in one-letter code: UPF0301 protein Rfer_1377 (199 aa).

It belongs to the UPF0301 (AlgH) family.

The protein is UPF0301 protein Rfer_1377 of Albidiferax ferrireducens (strain ATCC BAA-621 / DSM 15236 / T118) (Rhodoferax ferrireducens).